Here is a 148-residue protein sequence, read N- to C-terminus: Large ribosomal subunit protein uL13 (148 aa).

The protein belongs to the universal ribosomal protein uL13 family. Part of the 50S ribosomal subunit.

Functionally, this protein is one of the early assembly proteins of the 50S ribosomal subunit, although it is not seen to bind rRNA by itself. It is important during the early stages of 50S assembly. The chain is Large ribosomal subunit protein uL13 from Ureaplasma parvum serovar 3 (strain ATCC 27815 / 27 / NCTC 11736).